We begin with the raw amino-acid sequence, 651 residues long: Aspartate--tRNA ligase, mitochondrial (651 aa).

Residues 1 to 44 constitute a mitochondrion transit peptide; the sequence is MFCWLSRLCGELSTPTRRTTQLIWSSAARSMVLSSQRIPELSSF. Thr216 is subject to Phosphothreonine. Phosphoserine is present on Ser239. The interval 241 to 244 is aspartate; it reads QQFK. Arg263 is an L-aspartate binding site. An ATP-binding site is contributed by 263 to 265; that stretch reads RDE. Position 379 is an N6-acetyllysine (Lys379). Glu532 provides a ligand contact to ATP. Arg539 provides a ligand contact to L-aspartate. Residue 581 to 584 participates in ATP binding; sequence GLDR.

Belongs to the class-II aminoacyl-tRNA synthetase family. Type 1 subfamily. Homodimer.

Its subcellular location is the mitochondrion matrix. The protein resides in the mitochondrion membrane. It carries out the reaction tRNA(Asp) + L-aspartate + ATP = L-aspartyl-tRNA(Asp) + AMP + diphosphate. Catalyzes the attachment of aspartate to tRNA(Asp) in a two-step reaction: aspartate is first activated by ATP to form Asp-AMP and then transferred to the acceptor end of tRNA(Asp). The polypeptide is Aspartate--tRNA ligase, mitochondrial (DARS2) (Bos taurus (Bovine)).